The following is a 106-amino-acid chain: Toxin-like structure LSTX-D6 (106 aa).

A signal peptide spans M1 to S20. A propeptide spanning residues E21–R41 is cleaved from the precursor. Disulfide bonds link C45/C60, C52/C69, C59/C85, and C71/C83.

It belongs to the neurotoxin 19 (CSTX) family. 02 (D7) subfamily. In terms of tissue distribution, expressed by the venom gland.

It is found in the secreted. In Lycosa singoriensis (Wolf spider), this protein is Toxin-like structure LSTX-D6.